The following is a 379-amino-acid chain: Glutamate 5-kinase (379 aa).

Residue K17 participates in ATP binding. Residues S57, D144, and N156 each contribute to the substrate site. ATP is bound at residue 176–177; the sequence is SD. A PUA domain is found at 282 to 359; that stretch reads SGILMIDQGA…EEIESILGYE (78 aa).

Belongs to the glutamate 5-kinase family.

The protein localises to the cytoplasm. It catalyses the reaction L-glutamate + ATP = L-glutamyl 5-phosphate + ADP. It functions in the pathway amino-acid biosynthesis; L-proline biosynthesis; L-glutamate 5-semialdehyde from L-glutamate: step 1/2. Its function is as follows. Catalyzes the transfer of a phosphate group to glutamate to form L-glutamate 5-phosphate. The polypeptide is Glutamate 5-kinase (Bartonella henselae (strain ATCC 49882 / DSM 28221 / CCUG 30454 / Houston 1) (Rochalimaea henselae)).